A 301-amino-acid chain; its full sequence is tRNA-cytidine(32) 2-sulfurtransferase (301 aa).

Positions S55–S60 match the PP-loop motif motif. 3 residues coordinate [4Fe-4S] cluster: C130, C133, and C221.

Belongs to the TtcA family. In terms of assembly, homodimer. The cofactor is Mg(2+). [4Fe-4S] cluster is required as a cofactor.

The protein resides in the cytoplasm. It carries out the reaction cytidine(32) in tRNA + S-sulfanyl-L-cysteinyl-[cysteine desulfurase] + AH2 + ATP = 2-thiocytidine(32) in tRNA + L-cysteinyl-[cysteine desulfurase] + A + AMP + diphosphate + H(+). Its pathway is tRNA modification. Functionally, catalyzes the ATP-dependent 2-thiolation of cytidine in position 32 of tRNA, to form 2-thiocytidine (s(2)C32). The sulfur atoms are provided by the cysteine/cysteine desulfurase (IscS) system. The protein is tRNA-cytidine(32) 2-sulfurtransferase of Acinetobacter baumannii (strain AB307-0294).